The primary structure comprises 751 residues: Zinc finger protein 184 (751 aa).

The KRAB domain maps to 28–99 (VTFKDVIVDF…EPSIPVGTCA (72 aa)). Phosphoserine occurs at positions 117, 122, and 199. The span at 191–202 (SNLVTQEPSPEE) shows a compositional bias: polar residues. Residues 191–212 (SNLVTQEPSPEETSTKRSIKQN) are disordered. Lys-206 participates in a covalent cross-link: Glycyl lysine isopeptide (Lys-Gly) (interchain with G-Cter in SUMO2). 19 C2H2-type zinc fingers span residues 222-244 (CKCNECGKAFSYCSALIRHQRTH), 250-272 (YKCNECEKAFSRSENLINHQRIH), 278-300 (YKCDQCGKGFIEGPSLTQHQRIH), 306-328 (YKCDECGKAFSQRTHLVQHQRIH), 334-356 (YTCNECGKAFSQRGHFMEHQKIH), 362-384 (FKCDECDKTFTRSTHLTQHQKIH), 390-412 (YKCNECGKAFNGPSTFIRHHMIH), 418-440 (YECNECGKAFSQHSNLTQHQKTH), 446-468 (YDCAECGKSFSYWSSLAQHLKIH), 474-496 (YKCNECGKAFSYCSSLTQHRRIH), 502-524 (FECSECGKAFSYLSNLNQHQKTH), 530-552 (YECKECGKAFIRSSSLAKHERIH), 558-580 (YQCHECGKTFSYGSSLIQHRKIH), 586-608 (YKCNECGRAFNQNIHLTQHKRIH), 614-636 (YECAECGKAFRHCSSLAQHQKTH), 642-664 (YQCNKCEKTFSQSSHLTQHQRIH), 670-692 (YKCNECDKAFSRSTHLTEHQNTH), 698-720 (YNCNECRKTFSQSTYLIQHQRIH), and 726-748 (FGCNDCGKSFRYRSALNKHQRLH).

Belongs to the krueppel C2H2-type zinc-finger protein family. In terms of tissue distribution, predominant expression in testis.

It is found in the nucleus. Its function is as follows. May be involved in transcriptional regulation. The protein is Zinc finger protein 184 (ZNF184) of Homo sapiens (Human).